The chain runs to 132 residues: Profilin (132 aa).

Belongs to the profilin family. As to quaternary structure, occurs in many kinds of cells as a complex with monomeric actin in a 1:1 ratio.

It is found in the cytoplasm. Its subcellular location is the cytoskeleton. Functionally, binds to actin and affects the structure of the cytoskeleton. At high concentrations, profilin prevents the polymerization of actin, whereas it enhances it at low concentrations. By binding to PIP2, it inhibits the formation of IP3 and DG. The polypeptide is Profilin (Naegleria pringsheimi (Amoeba)).